A 510-amino-acid polypeptide reads, in one-letter code: Pheromone-processing carboxypeptidase kex1 (510 aa).

A signal peptide spans 1 to 21 (MISKLLKIVLLTAGVIGNTLA). Residues 22–468 (DSRIHEQYLV…SPDLGNGNYK (447 aa)) are Lumenal-facing. 2 N-linked (GlcNAc...) asparagine glycosylation sites follow: N51 and N104. Active-site residues include S175 and D367. Residues N392 and N416 are each glycosylated (N-linked (GlcNAc...) asparagine). H427 is a catalytic residue. A helical transmembrane segment spans residues 469-489 (WLYLGLIPVALTIIILFSIYL). At 490-510 (CRRFGLFGLSKQRYQPISPTP) the chain is on the cytoplasmic side.

Belongs to the peptidase S10 family.

It localises to the golgi apparatus. Its subcellular location is the trans-Golgi network membrane. It is found in the vacuole membrane. The enzyme catalyses Preferential release of a C-terminal arginine or lysine residue.. Its function is as follows. Protease with a carboxypeptidase B-like function involved in the C-terminal processing of the lysine and arginine residues from protein precursors. Promotes cell fusion and is involved in the programmed cell death. The polypeptide is Pheromone-processing carboxypeptidase kex1 (kex1) (Schizosaccharomyces pombe (strain 972 / ATCC 24843) (Fission yeast)).